Reading from the N-terminus, the 431-residue chain is Transposase for insertion sequence element IS232 (431 aa).

One can recognise an HTH IS21-type domain in the interval 20–79; it reads PNFKKLMGNLKMKINKSQLARELNVDRRTIDKYLNGFTPKGTKNKTSKIDTYYEVIAALL. Residues 35–54 constitute a DNA-binding region (H-T-H motif); sequence KSQLARELNVDRRTIDKYLN. Residues 140–315 enclose the Integrase catalytic domain; the sequence is YETPPGEQAQ…IPVFALKQEK (176 aa).

This sequence belongs to the transposase IS21/IS408/IS1162 family.

Involved in the transposition of the insertion sequence. This is Transposase for insertion sequence element IS232 from Bacillus thuringiensis subsp. berliner.